Consider the following 435-residue polypeptide: GTPase Der (435 aa).

EngA-type G domains lie at 4-167 and 175-350; these read PVVA…PEKD and IRFS…DNHN. GTP is bound by residues 10 to 17, 57 to 61, 119 to 122, 181 to 188, 228 to 232, and 293 to 296; these read GRPNVGKS, DTGGI, NKAD, DTAGI, and NKWD. Positions 351 to 435 constitute a KH-like domain; the sequence is KRVQSATLND…PIHLIERARK (85 aa).

This sequence belongs to the TRAFAC class TrmE-Era-EngA-EngB-Septin-like GTPase superfamily. EngA (Der) GTPase family. Associates with the 50S ribosomal subunit.

Its function is as follows. GTPase that plays an essential role in the late steps of ribosome biogenesis. This Levilactobacillus brevis (strain ATCC 367 / BCRC 12310 / CIP 105137 / JCM 1170 / LMG 11437 / NCIMB 947 / NCTC 947) (Lactobacillus brevis) protein is GTPase Der.